The primary structure comprises 404 residues: Serine/threonine transporter SstT (404 aa).

9 helical membrane-spanning segments follow: residues 17 to 37 (IGIG…VTAI), 39 to 59 (ILGQ…VFAL), 75 to 95 (MTLI…VAVI), 138 to 158 (ALAT…GLAL), 179 to 199 (IVVW…FSTV), 212 to 232 (LLIL…NPLL), 287 to 307 (IPLG…VLTL), 319 to 339 (FLTA…ASGV), and 354 to 374 (FGIS…VGVI).

It belongs to the dicarboxylate/amino acid:cation symporter (DAACS) (TC 2.A.23) family.

It is found in the cell membrane. The enzyme catalyses L-serine(in) + Na(+)(in) = L-serine(out) + Na(+)(out). It catalyses the reaction L-threonine(in) + Na(+)(in) = L-threonine(out) + Na(+)(out). Involved in the import of serine and threonine into the cell, with the concomitant import of sodium (symport system). In Streptococcus equi subsp. equi (strain 4047), this protein is Serine/threonine transporter SstT.